The sequence spans 654 residues: Myrosinase-binding protein 2 (654 aa).

4 consecutive Jacalin-type lectin domains span residues serine 2–alanine 151, leucine 156–proline 291, proline 346–proline 489, and alanine 502–proline 645. Positions valine 314–proline 346 are enriched in pro residues. The tract at residues valine 314–asparagine 355 is disordered.

The protein belongs to the jacalin lectin family. As to expression, expressed in flowers. Detected mainly in ovules and styles of immature flowers, but also in pistils, styles, stamens, petals and embryos. Not detected in leaves.

The protein is Myrosinase-binding protein 2 (MBP2) of Arabidopsis thaliana (Mouse-ear cress).